Here is a 265-residue protein sequence, read N- to C-terminus: Thiazole synthase (265 aa).

Lysine 106 acts as the Schiff-base intermediate with DXP in catalysis. 1-deoxy-D-xylulose 5-phosphate contacts are provided by residues glycine 167, 193-194, and 215-216; these read AG and NS.

The protein belongs to the ThiG family. As to quaternary structure, homotetramer. Forms heterodimers with either ThiH or ThiS.

Its subcellular location is the cytoplasm. It carries out the reaction [ThiS sulfur-carrier protein]-C-terminal-Gly-aminoethanethioate + 2-iminoacetate + 1-deoxy-D-xylulose 5-phosphate = [ThiS sulfur-carrier protein]-C-terminal Gly-Gly + 2-[(2R,5Z)-2-carboxy-4-methylthiazol-5(2H)-ylidene]ethyl phosphate + 2 H2O + H(+). It functions in the pathway cofactor biosynthesis; thiamine diphosphate biosynthesis. Functionally, catalyzes the rearrangement of 1-deoxy-D-xylulose 5-phosphate (DXP) to produce the thiazole phosphate moiety of thiamine. Sulfur is provided by the thiocarboxylate moiety of the carrier protein ThiS. In vitro, sulfur can be provided by H(2)S. The chain is Thiazole synthase from Prochlorococcus marinus subsp. pastoris (strain CCMP1986 / NIES-2087 / MED4).